Consider the following 218-residue polypeptide: Copper acquisition factor BIM1 (218 aa).

Residues 1 to 19 (MFALKFILITSFIASTALA) form the signal peptide. Cu(2+) is bound by residues histidine 20 and histidine 65. 2 cysteine pairs are disulfide-bonded: cysteine 40-cysteine 144 and cysteine 110-cysteine 161. N-linked (GlcNAc...) asparagine glycosylation is found at asparagine 87, asparagine 91, and asparagine 124. Position 138 (aspartate 138) interacts with Cu(2+). 2 N-linked (GlcNAc...) asparagine glycosylation sites follow: asparagine 158 and asparagine 170. The disordered stretch occupies residues 160–194 (TCTDDASRTSNASSTSSGSATATSAAATSSSSGTS). Positions 167–194 (RTSNASSTSSGSATATSAAATSSSSGTS) are enriched in low complexity. Serine 190 carries the GPI-anchor amidated serine lipid modification. A propeptide spans 191–218 (SGTSGAIKEVVGLGALSLALGIAGLIIL) (removed in mature form).

The protein belongs to the X325 family. Cu(2+) serves as cofactor.

The protein localises to the cell membrane. Its function is as follows. Lytic polysaccharide monooxygenase-like protein that has diverged to biological functions other than polysaccharide degradation since it does not perform oxidative cleavage of polysaccharides. Cell surface-bound protein that functions in the copper-accumulation pathway shared by the CUF1-dependent copper transporter CTR1. Involved in maintaining cell wall integrity during copper deficiency. Binds Cu(2+) with an estimated 1:1 stoichiometry and might serve as an extracellular copper ligand. FRE4 and FRE7 metalloreductases probably function together with CTR1 and BIM1 to liberate the Cu(2+) bound to the BIM1 copper-binding site for subsequent import of Cu(+) into the cell by CTR1, via the reduction of BIM1-bound Cu(2+) to Cu(+) to reduce binding affinity for BIM1 but increase affinity for CTR1. Facilitates copper acquisition in the brain of mammalian hosts and acts as a copper-dependent virulence trait in fungal meningitis. While BIM1 plays a critical role in cryptococcal meningitis, at least in part through its role in copper acquisition, it could play additional roles during copper limitation or as a means to invade and colonize host tissues in the brain, by compromising host carbohydrate integrity via its lytic polysaccharide monooxygenase (LPMO) activity, which has still to be determined. In Cryptococcus neoformans var. neoformans serotype D (strain JEC21 / ATCC MYA-565) (Filobasidiella neoformans), this protein is Copper acquisition factor BIM1.